We begin with the raw amino-acid sequence, 124 residues long: KESAAAKFERQHMDSSTSSASSSNYCNQMMKSRNLTQSRCKPVNTFVHESLADVQAVCSQKNVACKNGQTNCYQSYSTMSITDCRETGSSKYPNCAYKTTQAKKHIIVACEGNPYVPVHFDASV.

The span at 1–13 (KESAAAKFERQHM) shows a compositional bias: basic and acidic residues. The disordered stretch occupies residues 1 to 24 (KESAAAKFERQHMDSSTSSASSSN). K7 and R10 together coordinate substrate. The Proton acceptor role is filled by H12. Disulfide bonds link C26/C84, C40/C95, C58/C110, and C65/C72. N34 is a glycosylation site (N-linked (GlcNAc...) asparagine; partial). Residues 41 to 45 (KPVNT), K66, and R85 each bind substrate. H119 acts as the Proton donor in catalysis.

The protein belongs to the pancreatic ribonuclease family. In terms of assembly, monomer. Interacts with and forms tight 1:1 complexes with RNH1. Dimerization of two such complexes may occur. Interaction with RNH1 inhibits this protein. Pancreas.

Its subcellular location is the secreted. The catalysed reaction is an [RNA] containing cytidine + H2O = an [RNA]-3'-cytidine-3'-phosphate + a 5'-hydroxy-ribonucleotide-3'-[RNA].. The enzyme catalyses an [RNA] containing uridine + H2O = an [RNA]-3'-uridine-3'-phosphate + a 5'-hydroxy-ribonucleotide-3'-[RNA].. In terms of biological role, endonuclease that catalyzes the cleavage of RNA on the 3' side of pyrimidine nucleotides. Acts on single-stranded and double-stranded RNA. This is Ribonuclease pancreatic (RNASE1) from Aepyceros melampus (Impala).